The chain runs to 107 residues: U1-lycotoxin-Ls1q (107 aa).

An N-terminal signal peptide occupies residues 1–20 (MMKVLVVVALLVTLISYSSS). Residues 21–41 (EGIDDLEADELLSLMANEQTR) constitute a propeptide that is removed on maturation. Disulfide bonds link Cys-44/Cys-59, Cys-51/Cys-68, Cys-58/Cys-86, and Cys-70/Cys-84.

This sequence belongs to the neurotoxin 19 (CSTX) family. 04 (U1-Lctx) subfamily. As to expression, expressed by the venom gland.

It is found in the secreted. The polypeptide is U1-lycotoxin-Ls1q (Lycosa singoriensis (Wolf spider)).